Here is a 146-residue protein sequence, read N- to C-terminus: Large ribosomal subunit protein uL15 (146 aa).

Residues 1–13 (MKLHELKAAEGSR) are compositionally biased toward basic and acidic residues. Positions 1–61 (MKLHELKAAE…GGQTPLFRRM (61 aa)) are disordered. Composition is skewed to gly residues over residues 23–35 (TSSG…GRGQ) and 42–52 (SGGGVRLGFEG).

The protein belongs to the universal ribosomal protein uL15 family. As to quaternary structure, part of the 50S ribosomal subunit.

In terms of biological role, binds to the 23S rRNA. The chain is Large ribosomal subunit protein uL15 from Streptococcus uberis (strain ATCC BAA-854 / 0140J).